A 27-amino-acid chain; its full sequence is ALSILKGLEKLAKMGIALTNCKATKKC.

Cys21 and Cys27 form a disulfide bridge.

As to expression, expressed by the skin glands.

It is found in the secreted. Its function is as follows. Antimicrobial activity against Gram-negative bacterium E.coli. This is Palustrin-1d from Lithobates palustris (Pickerel frog).